The primary structure comprises 204 residues: Abscisic acid receptor PYL3 (204 aa).

The tract at residues 40–191 (HEPRDHQCSS…NLKSLAEVSE (152 aa)) is START-like. A disulfide bridge connects residues cysteine 47 and cysteine 172. Residues lysine 76, 104–109 (ATRSTE), 131–137 (RLKNYSS), and glutamate 156 each bind abscisate. The Gate loop motif lies at 100-104 (SGLPA). A Latch loop motif is present at residues 130–132 (HRL).

This sequence belongs to the PYR/PYL/RCAR abscisic acid intracellular receptor family. In terms of assembly, monomer. Interacts with PP2C50. Binding to PP2C50 is dependent on the presence of abscisic acid (ABA). Interacts with PP2C30 and PP2C53.

It localises to the cytoplasm. The protein localises to the cytosol. Its subcellular location is the nucleus. In terms of biological role, involved in abscisic acid (ABA) signaling during seed germination and abiotic stress response. Acts as a positive regulator of ABA-mediated inhibition of seed germination, and tolerance to drought and cold stresses. Together with PP2C50 and SAPK10, may form an ABA signaling module involved in stress response. Inhibits the protein phosphatases PP2C06 and PP2C09 when activated by abscisic acid (ABA). This chain is Abscisic acid receptor PYL3, found in Oryza sativa subsp. japonica (Rice).